The following is a 272-amino-acid chain: Ethanolamine ammonia-lyase small subunit (272 aa).

Positions 161, 182, and 211 each coordinate adenosylcob(III)alamin.

The protein belongs to the EutC family. In terms of assembly, the basic unit is a heterodimer which dimerizes to form tetramers. The heterotetramers trimerize; 6 large subunits form a core ring with 6 small subunits projecting outwards. It depends on adenosylcob(III)alamin as a cofactor.

Its subcellular location is the bacterial microcompartment. It catalyses the reaction ethanolamine = acetaldehyde + NH4(+). It participates in amine and polyamine degradation; ethanolamine degradation. Functionally, catalyzes the deamination of various vicinal amino-alcohols to oxo compounds. Allows this organism to utilize ethanolamine as the sole source of nitrogen and carbon in the presence of external vitamin B12. This is Ethanolamine ammonia-lyase small subunit from Pseudomonas putida (strain ATCC 47054 / DSM 6125 / CFBP 8728 / NCIMB 11950 / KT2440).